The chain runs to 90 residues: Probable Fe(2+)-trafficking protein (90 aa).

It belongs to the Fe(2+)-trafficking protein family. As to quaternary structure, monomer.

Could be a mediator in iron transactions between iron acquisition and iron-requiring processes, such as synthesis and/or repair of Fe-S clusters in biosynthetic enzymes. In Yersinia pseudotuberculosis serotype O:1b (strain IP 31758), this protein is Probable Fe(2+)-trafficking protein.